We begin with the raw amino-acid sequence, 234 residues long: Thrombin-like enzyme contortrixobin (234 aa).

In terms of domain architecture, Peptidase S1 spans 1–225 (VVGGDECNIN…YNDWIQSIIA (225 aa)). Intrachain disulfides connect C7-C139, C26-C42, C74-C232, C118-C186, C150-C165, and C176-C201. Residues H41 and D86 each act as charge relay system in the active site. S180 functions as the Charge relay system in the catalytic mechanism.

As to quaternary structure, monomer. In terms of processing, not glycosylated. Expressed by the venom gland.

The protein localises to the secreted. Its activity is regulated as follows. Strongly inhibited by diisopropylfluorophosphate (DFP) and to a lesser extent by PMSF, benzamidine and 4,6-diamidino-2-phenylindole. Low inhibition by hirudin. Its function is as follows. Thrombin-like snake venom serine protease that cleaves beta chain of fibrinogen (FGB), releasing fibrinopeptide B. Has a coagulant activity activating blood coagulation factors V (F5) and XIII (F13A1). The sequence is that of Thrombin-like enzyme contortrixobin from Agkistrodon contortrix contortrix (Southern copperhead).